The primary structure comprises 526 residues: Probable di/tripeptide-binding protein 5 (526 aa).

Residues 1–21 (MRLAAFSLFLAPLLLAQPAAA) form the signal peptide.

This sequence belongs to the bacterial solute-binding protein 5 family. The complex is composed of two ATP-binding proteins (DppD and DppF), two transmembrane proteins (DppB and DppC) and a solute-binding protein (DppA5). Five orthologous SBPs (DppA1-A5) are present in P.aeruginosa, which increases the substrate specificity of the DppBCDF transporter.

Part of the ABC transporter DppABCDF involved in the uptake of various di/tripeptides. This Pseudomonas aeruginosa (strain UCBPP-PA14) protein is Probable di/tripeptide-binding protein 5.